Here is a 739-residue protein sequence, read N- to C-terminus: Sulfate transporter (739 aa).

2 stretches are compositionally biased toward basic and acidic residues: residues 1 to 17 (MSSE…RDLP) and 31 to 46 (TQRR…ETGH). Positions 1-47 (MSSENKEQHDLSPRDLPEEAFGFPSELPLETQRRSGTDLRQSETGHG) are disordered. At S12 the chain carries Phosphoserine. Helical transmembrane passes span 112–132 (VMSG…YSLL) and 137–157 (PIYG…FGTS). A glycan (N-linked (GlcNAc...) asparagine) is linked at N205. Transmembrane regions (helical) follow at residues 227 to 247 (FMAG…VSVY) and 255 to 275 (GFVT…LLGL). A glycan (N-linked (GlcNAc...) asparagine) is linked at N357. The next 4 helical transmembrane spans lie at 378-398 (LIPN…AITV), 420-440 (AIGF…SAAL), 455-475 (LSAI…APLF), and 524-544 (LLST…CVIL). Positions 568–719 (TYKNLRSKSG…YSLSEAVAFA (152 aa)) constitute an STAS domain.

This sequence belongs to the SLC26A/SulP transporter (TC 2.A.53) family. In terms of processing, N-glycosylated. As to expression, distributed mainly in the thymus, testis and osteoblastic cells. Highly expressed in the bone, cartilage, kidney and colon.

It localises to the cell membrane. Its subcellular location is the apical cell membrane. It carries out the reaction oxalate(in) + sulfate(out) = oxalate(out) + sulfate(in). The catalysed reaction is sulfate(out) + 2 chloride(in) = sulfate(in) + 2 chloride(out). The enzyme catalyses oxalate(out) + 2 chloride(in) = oxalate(in) + 2 chloride(out). It catalyses the reaction bromide(in) + chloride(out) = bromide(out) + chloride(in). It carries out the reaction nitrate(in) + chloride(out) = nitrate(out) + chloride(in). The catalysed reaction is iodide(in) + chloride(out) = iodide(out) + chloride(in). Sulfate transporter which mediates sulfate uptake into chondrocytes in order to maintain adequate sulfation of proteoglycans which is needed for cartilage development. Mediates electroneutral anion exchange of sulfate ions for oxalate ions, sulfate and oxalate ions for chloride and/or hydroxyl ions and chloride ions for bromide, iodide and nitrate ions. The coupling of sulfate transport to both hydroxyl and chloride ions likely serves to ensure transport at both acidic pH when most sulfate uptake is mediated by sulfate-hydroxide exchange and alkaline pH when most sulfate uptake is mediated by sulfate-chloride exchange. Essential for chondrocyte proliferation, differentiation and cell size expansion. This chain is Sulfate transporter (Slc26a2), found in Mus musculus (Mouse).